A 138-amino-acid chain; its full sequence is MIKCTRRIEFDAGHRIIGHQNKCQYLHGHRYVLEITIAAKNTDELGMVVDFGLIKDLAKGWVDENFDHSLILHQGDKEIGQKIESHTGQKVYYLKNNPTAENIALHLKNEIFPKLFESQKFFVTNIKLFETPNCFVEV.

His14 is a binding site for Zn(2+). Cys23 (proton acceptor) is an active-site residue. Zn(2+) contacts are provided by His27 and His29. Residues His68 and Glu130 each act as charge relay system in the active site.

This sequence belongs to the PTPS family. QueD subfamily. It depends on Zn(2+) as a cofactor.

It catalyses the reaction 7,8-dihydroneopterin 3'-triphosphate + H2O = 6-carboxy-5,6,7,8-tetrahydropterin + triphosphate + acetaldehyde + 2 H(+). Its pathway is purine metabolism; 7-cyano-7-deazaguanine biosynthesis. In terms of biological role, catalyzes the conversion of 7,8-dihydroneopterin triphosphate (H2NTP) to 6-carboxy-5,6,7,8-tetrahydropterin (CPH4) and acetaldehyde. In Rickettsia bellii (strain RML369-C), this protein is 6-carboxy-5,6,7,8-tetrahydropterin synthase (queD).